Reading from the N-terminus, the 341-residue chain is Ketol-acid reductoisomerase (NADP(+)) (341 aa).

The 182-residue stretch at 1-182 folds into the KARI N-terminal Rossmann domain; the sequence is MTEMFYDDDA…GGTRAGVIKT (182 aa). NADP(+) is bound by residues 25–28, Lys-48, Ser-51, Ser-53, and 83–86; these read YGSQ and DQHQ. His-108 is a catalytic residue. Residue Gly-134 participates in NADP(+) binding. The region spanning 183 to 328 is the KARI C-terminal knotted domain; sequence TFTEETETDL…RELRGLFSWQ (146 aa). Residues Asp-191, Glu-195, Glu-227, and Glu-231 each contribute to the Mg(2+) site. Ser-252 is a substrate binding site.

It belongs to the ketol-acid reductoisomerase family. Mg(2+) is required as a cofactor.

The catalysed reaction is (2R)-2,3-dihydroxy-3-methylbutanoate + NADP(+) = (2S)-2-acetolactate + NADPH + H(+). It catalyses the reaction (2R,3R)-2,3-dihydroxy-3-methylpentanoate + NADP(+) = (S)-2-ethyl-2-hydroxy-3-oxobutanoate + NADPH + H(+). Its pathway is amino-acid biosynthesis; L-isoleucine biosynthesis; L-isoleucine from 2-oxobutanoate: step 2/4. It participates in amino-acid biosynthesis; L-valine biosynthesis; L-valine from pyruvate: step 2/4. In terms of biological role, involved in the biosynthesis of branched-chain amino acids (BCAA). Catalyzes an alkyl-migration followed by a ketol-acid reduction of (S)-2-acetolactate (S2AL) to yield (R)-2,3-dihydroxy-isovalerate. In the isomerase reaction, S2AL is rearranged via a Mg-dependent methyl migration to produce 3-hydroxy-3-methyl-2-ketobutyrate (HMKB). In the reductase reaction, this 2-ketoacid undergoes a metal-dependent reduction by NADPH to yield (R)-2,3-dihydroxy-isovalerate. In Arthrobacter sp. (strain FB24), this protein is Ketol-acid reductoisomerase (NADP(+)).